The sequence spans 455 residues: DENN domain-containing protein 11 (455 aa).

An N-acetylvaline modification is found at V2. The region spanning 15–187 (EGPAVSVPQD…QLEMPGHYSH (173 aa)) is the uDENN domain. Positions 21–61 (VPQDPALQAGGWVRGGSGGGRVAAEAPRRREPEEPAPPEVL) are disordered. Residues 32–41 (WVRGGSGGGR) are compositionally biased toward gly residues. The residue at position 41 (R41) is an Omega-N-methylarginine. Residues 214 to 362 (WLPSIHRYMY…LNSADREKYR (149 aa)) enclose the cDENN domain. The dDENN domain maps to 364 to 455 (LNEQRQMLLY…MLVIDNPCCP (92 aa)).

It belongs to the DENND11 family. As to expression, expressed within the somatodendritic compartment of neurons, is also present on dendritic growth cones, but is not found in astrocytes.

Functionally, probable guanine nucleotide exchange factor (GEF). May promote the exchange of GDP to GTP, converting inactive GDP-bound small GTPases into their active GTP-bound form. May play a role in neuritogenesis, as well as in neuronal recovery and/or restructuring in the hippocampus following transient cerebral ischemia. The protein is DENN domain-containing protein 11 (Dennd11) of Rattus norvegicus (Rat).